An 83-amino-acid chain; its full sequence is Small ribosomal subunit protein bS20 (83 aa).

This sequence belongs to the bacterial ribosomal protein bS20 family.

Binds directly to 16S ribosomal RNA. In Staphylococcus haemolyticus (strain JCSC1435), this protein is Small ribosomal subunit protein bS20.